A 556-amino-acid polypeptide reads, in one-letter code: Phenylalanine--tRNA ligase beta subunit (556 aa).

A B5 domain is found at 274–349 (HEPEEMEVDL…ITLGLNKIGY (76 aa)). 4 residues coordinate Mg(2+): Asp-327, Asp-333, Glu-336, and Glu-337.

It belongs to the phenylalanyl-tRNA synthetase beta subunit family. Type 2 subfamily. In terms of assembly, tetramer of two alpha and two beta subunits. It depends on Mg(2+) as a cofactor.

The protein resides in the cytoplasm. The catalysed reaction is tRNA(Phe) + L-phenylalanine + ATP = L-phenylalanyl-tRNA(Phe) + AMP + diphosphate + H(+). This chain is Phenylalanine--tRNA ligase beta subunit, found in Korarchaeum cryptofilum (strain OPF8).